The following is a 664-amino-acid chain: MAESRKRFLGRAARNPLPVTRDLQLPPTRRDQPAFREQRKQKLKEYLLIRKTVFPYKQENQISRDQKMITSEDRVQEGKKVVKLKTEVADKENIESTVEKNCIPLKAGEVTSSEIHNSKDNVQAVQLLSTRDDLPGQTVTLDPACHHKDNKKMQMTAEKPKQDSNVSKKRVLGYYHGQIVQSKINSFRKLPSVKGESLTTTKKLPTTVSKAMKAQSEPANTVSVKASTTAAATKFADAKPVSTASKDTLVRPPIRSLHSSSHGAAKQGLSRPLANVTVRKGMLDKESHRSEPVVSVVKAGSSQAPSRSIASKDAARTDSSNTRLMVKPKDTDQRRYTIAGASVHRSAQLKDTTAERKAQMTEWRTGKGKGLKRPPHSVVTQAEPKGQSENPVGSFWTTMAEEDEQRLFTEKVNKTISECLNLINEGCPKEEILATLNDLIHNIPDAKKLVKYWICLVRIEPITSPIENIISIYEKAILAGAQPIEEMRHIIIDILTTKSQEKVNLGENIEEAHATKEPIQEVNADANVGSGKPGEENEHHGKVEVYEDDQDNKIKDPDLTTPDSKTEAGCIIRYNVSSTPRLQSMKKMQHDKNSTLKELKFLTPVRRSRRIQDKTSRLPAMLKDHDPSVSSLEQLSELGGDAFVCRPNAALCPLFFETDVAEEE.

The tract at residues Met-1–Gln-38 is disordered. Residues Thr-28–Gln-38 are compositionally biased toward basic and acidic residues. The tract at residues Pro-160–Ser-319 is association with alpha- and beta-tubulin. A Phosphoserine modification is found at Ser-186. 4 disordered regions span residues Ile-254–Leu-273, Leu-283–Pro-328, Gly-366–Gly-393, and Ala-512–Val-545. Over residues Gly-300 to Ile-309 the composition is skewed to polar residues. Positions Gly-366–Pro-375 are enriched in basic residues. The segment covering Pro-533 to Val-545 has biased composition (basic and acidic residues). Residue Thr-561 is modified to Phosphothreonine. Position 577 is a phosphoserine (Ser-577). Thr-579 carries the phosphothreonine modification. Ser-584 is modified (phosphoserine).

This sequence belongs to the CKAP2 family. As to quaternary structure, associates with alpha- and beta-tubulins.

The protein resides in the cytoplasm. Its subcellular location is the cytoskeleton. It localises to the spindle. It is found in the spindle pole. In terms of biological role, possesses microtubule stabilizing properties. Involved in regulating aneuploidy, cell cycling, and cell death in a p53-dependent manner. The sequence is that of Cytoskeleton-associated protein 2 from Mus musculus (Mouse).